A 234-amino-acid chain; its full sequence is Gem-associated protein 8 (234 aa).

Positions leucine 60–serine 116 are disordered. The span at lysine 67 to glycine 83 shows a compositional bias: low complexity. The span at arginine 100–glutamate 110 shows a compositional bias: basic and acidic residues. A coiled-coil region spans residues isoleucine 130–glutamine 153.

In terms of assembly, part of the core SMN complex that contains SMN1, GEMIN2/SIP1, DDX20/GEMIN3, GEMIN4, GEMIN5, GEMIN6, GEMIN7, GEMIN8 and STRAP/UNRIP. Part of the SMN-Sm complex that contains SMN1, GEMIN2/SIP1, DDX20/GEMIN3, GEMIN4, GEMIN5, GEMIN6, GEMIN7, GEMIN8, STRAP/UNRIP and the Sm proteins SNRPB, SNRPD1, SNRPD2, SNRPD3, SNRPE, SNRPF and SNRPG. Interacts with GEMIN6; the interaction is direct. Interacts with GEMIN7; the interaction is direct. Interacts with SMN1; the interaction is direct. Interacts with GEMIN4; the interaction is direct.

The protein resides in the nucleus. It localises to the gem. Its subcellular location is the cytoplasm. In terms of biological role, the SMN complex catalyzes the assembly of small nuclear ribonucleoproteins (snRNPs), the building blocks of the spliceosome, and thereby plays an important role in the splicing of cellular pre-mRNAs. Most spliceosomal snRNPs contain a common set of Sm proteins SNRPB, SNRPD1, SNRPD2, SNRPD3, SNRPE, SNRPF and SNRPG that assemble in a heptameric protein ring on the Sm site of the small nuclear RNA to form the core snRNP (Sm core). In the cytosol, the Sm proteins SNRPD1, SNRPD2, SNRPE, SNRPF and SNRPG are trapped in an inactive 6S pICln-Sm complex by the chaperone CLNS1A that controls the assembly of the core snRNP. To assemble core snRNPs, the SMN complex accepts the trapped 5Sm proteins from CLNS1A forming an intermediate. Binding of snRNA inside 5Sm triggers eviction of the SMN complex, thereby allowing binding of SNRPD3 and SNRPB to complete assembly of the core snRNP. The polypeptide is Gem-associated protein 8 (GEMIN8) (Bos taurus (Bovine)).